We begin with the raw amino-acid sequence, 75 residues long: Putative DNA-directed RNA polymerase subunit omega (75 aa).

This sequence belongs to the RNA polymerase subunit omega family.

It is found in the plastid. The protein resides in the chloroplast. The catalysed reaction is RNA(n) + a ribonucleoside 5'-triphosphate = RNA(n+1) + diphosphate. Functionally, may be involved in RNA polymerase activity. The sequence is that of Putative DNA-directed RNA polymerase subunit omega (rpoZ) from Porphyra purpurea (Red seaweed).